The sequence spans 467 residues: Glutamyl-tRNA reductase (467 aa).

Substrate-binding positions include 49-52 (TCNR), Ser-109, 114-116 (EQQ), and Gln-120. Catalysis depends on Cys-50, which acts as the Nucleophile. 189 to 194 (GAGAMG) contacts NADP(+). Residues 446–467 (GFSDTTRYGTSPAQSSSKYHAE) are disordered. The span at 447-467 (FSDTTRYGTSPAQSSSKYHAE) shows a compositional bias: polar residues.

Belongs to the glutamyl-tRNA reductase family. Homodimer.

The enzyme catalyses (S)-4-amino-5-oxopentanoate + tRNA(Glu) + NADP(+) = L-glutamyl-tRNA(Glu) + NADPH + H(+). It participates in porphyrin-containing compound metabolism; protoporphyrin-IX biosynthesis; 5-aminolevulinate from L-glutamyl-tRNA(Glu): step 1/2. Functionally, catalyzes the NADPH-dependent reduction of glutamyl-tRNA(Glu) to glutamate 1-semialdehyde (GSA). The chain is Glutamyl-tRNA reductase from Mycobacterium leprae (strain TN).